We begin with the raw amino-acid sequence, 698 residues long: 4-hydroxybutyrate--CoA ligase [ADP-forming] (698 aa).

Residues 491–544 (QEVLKAYGLPLPKSTLAKNEAEAVKAAKKIGYPVVMKIASPQIIHKSDAGGVKV) enclose the ATP-grasp domain. 517 to 544 (AKKIGYPVVMKIASPQIIHKSDAGGVKV) lines the ATP pocket.

This sequence in the N-terminal section; belongs to the acetate CoA ligase alpha subunit family. In the C-terminal section; belongs to the acetate CoA ligase beta subunit family. Mg(2+) is required as a cofactor. Requires Mn(2+) as cofactor.

The enzyme catalyses 4-hydroxybutanoate + ATP + CoA = 4-hydroxybutanoyl-CoA + ADP + phosphate. Involved in thaumarchaeal hydroxypropionate/hydroxybutyrate (HP/HB) cycle, a modified version of the autotrophic HP/HB cycle of Crenarchaeota. Catalyzes the formation of 4-hydroxybutyryl-CoA, ADP and phosphate from 4-hydroxybutyrate, coenzyme A (CoA) and ATP. Can also use acetate, propionate and butyrate, with poor catalytic efficiency. In Nitrosopumilus maritimus (strain SCM1), this protein is 4-hydroxybutyrate--CoA ligase [ADP-forming].